The primary structure comprises 321 residues: tRNA(Ile)-lysidine synthase (321 aa).

An ATP-binding site is contributed by 21–26 (SYGSDS).

It belongs to the tRNA(Ile)-lysidine synthase family.

It is found in the cytoplasm. It catalyses the reaction cytidine(34) in tRNA(Ile2) + L-lysine + ATP = lysidine(34) in tRNA(Ile2) + AMP + diphosphate + H(+). Functionally, ligates lysine onto the cytidine present at position 34 of the AUA codon-specific tRNA(Ile) that contains the anticodon CAU, in an ATP-dependent manner. Cytidine is converted to lysidine, thus changing the amino acid specificity of the tRNA from methionine to isoleucine. In Campylobacter jejuni subsp. jejuni serotype O:2 (strain ATCC 700819 / NCTC 11168), this protein is tRNA(Ile)-lysidine synthase.